The following is a 223-amino-acid chain: Ribose-5-phosphate isomerase A (223 aa).

Substrate-binding positions include 32-35 (TGST), 85-88 (DGAD), and 98-101 (KGGG). Residue glutamate 107 is the Proton acceptor of the active site. Lysine 125 contacts substrate.

The protein belongs to the ribose 5-phosphate isomerase family. In terms of assembly, homodimer.

The catalysed reaction is aldehydo-D-ribose 5-phosphate = D-ribulose 5-phosphate. Its pathway is carbohydrate degradation; pentose phosphate pathway; D-ribose 5-phosphate from D-ribulose 5-phosphate (non-oxidative stage): step 1/1. Its function is as follows. Catalyzes the reversible conversion of ribose-5-phosphate to ribulose 5-phosphate. This Pseudomonas aeruginosa (strain LESB58) protein is Ribose-5-phosphate isomerase A.